The sequence spans 328 residues: Fructokinase-2 (328 aa).

The protein belongs to the carbohydrate kinase PfkB family.

It carries out the reaction D-fructose + ATP = D-fructose 6-phosphate + ADP + H(+). Its pathway is glycan biosynthesis; starch biosynthesis. In terms of biological role, may play an important role in maintaining the flux of carbon towards starch formation. In Solanum lycopersicum (Tomato), this protein is Fructokinase-2 (FRK2).